The sequence spans 259 residues: Emerin (259 aa).

Met1 is modified (N-acetylmethionine). The 45-residue stretch at 1–45 (MDDYAVLSDTELAAVLRQYNIPHGPIVGSTRKLYEKKIFEYETQR) folds into the LEM domain. Ser8, Ser29, Ser54, Ser72, Ser88, Ser99, Ser141, and Ser142 each carry phosphoserine. An interaction with F-actin region spans residues 46-223 (RRLLPPNSSS…PAAALGQDRQ (178 aa)). A Phosphotyrosine modification is found at Tyr161. An interaction with CTNNB1 region spans residues 168-187 (RPISNVSRSSLGLSYYPTSS). A phosphoserine mark is found at Ser171, Ser174, and Ser176. Residues 224 to 244 (VPLWGQLLLFLVFAAFLLFVY) traverse the membrane as a helical segment.

Interacts with lamins A and C, BANF1, GMCL, BCLAF1 and YTHDC1/YT521. Interacts with TMEM43; the interaction retains emerin in the inner nuclear membrane. Interacts with ACTB, SPTAN1, F-actin, CTNNB1 and beta-tubulin. Interacts with SUN1 and SUN2. Interacts with TMEM201. Interacts with NEMP1. As to expression, in the ovary, highest expression is seen in primordial follicle oocytes (at protein level). Detected in embryonic fibroblasts, skeletal muscle, heart muscle and tongue epithelium (at protein level). Widely expressed.

The protein localises to the nucleus inner membrane. It is found in the nucleus outer membrane. Stabilizes and promotes the formation of a nuclear actin cortical network. Stimulates actin polymerization in vitro by binding and stabilizing the pointed end of growing filaments. Inhibits beta-catenin activity by preventing its accumulation in the nucleus. Acts by influencing the nuclear accumulation of beta-catenin through a CRM1-dependent export pathway. Links centrosomes to the nuclear envelope via a microtubule association. Required for proper localization of non-farnesylated prelamin-A/C. Together with NEMP1, contributes to nuclear envelope stiffness in germ cells. The chain is Emerin (Emd) from Mus musculus (Mouse).